Reading from the N-terminus, the 275-residue chain is Cis-toluene dihydrodiol dehydrogenase (275 aa).

9–33 (LVTGGGAGLGRAIVDRYVAEGARVA) lines the NAD(+) pocket. A substrate-binding site is contributed by Ser-142. The active-site Proton acceptor is the Tyr-155.

The protein belongs to the short-chain dehydrogenases/reductases (SDR) family.

The catalysed reaction is (1S,2R)-3-methylcyclohexa-3,5-diene-1,2-diol + NAD(+) = 3-methylcatechol + NADH + H(+). It functions in the pathway xenobiotic degradation; toluene degradation. This chain is Cis-toluene dihydrodiol dehydrogenase (todD), found in Pseudomonas putida (strain ATCC 700007 / DSM 6899 / JCM 31910 / BCRC 17059 / LMG 24140 / F1).